Here is a 759-residue protein sequence, read N- to C-terminus: Protein zyg-11 homolog A (759 aa).

3 LRR repeats span residues 204–227, 235–260, and 490–513; these read LPRLESLDISNTLVTDISALLTCK, MHYLKCLAMTKSQILAVIRELKCLLH, and VTSILALQLSPEQTAQLEELFMAV.

Belongs to the zyg-11 family.

Its function is as follows. Probably acts as a target recruitment subunit in an E3 ubiquitin ligase complex ZYGA-CUL2-elongin BC. The chain is Protein zyg-11 homolog A (ZYG11A) from Homo sapiens (Human).